The sequence spans 504 residues: Glucose-6-phosphate isomerase (504 aa).

E333 functions as the Proton donor in the catalytic mechanism. Catalysis depends on residues H364 and K473.

It belongs to the GPI family.

It localises to the cytoplasm. The enzyme catalyses alpha-D-glucose 6-phosphate = beta-D-fructose 6-phosphate. It participates in carbohydrate biosynthesis; gluconeogenesis. It functions in the pathway carbohydrate degradation; glycolysis; D-glyceraldehyde 3-phosphate and glycerone phosphate from D-glucose: step 2/4. In terms of biological role, catalyzes the reversible isomerization of glucose-6-phosphate to fructose-6-phosphate. The sequence is that of Glucose-6-phosphate isomerase from Xanthomonas oryzae pv. oryzae (strain PXO99A).